Reading from the N-terminus, the 204-residue chain is 3,4-dihydroxy-2-butanone 4-phosphate synthase (204 aa).

Residue glutamate 30 participates in Mg(2+) binding. Aspartate 34 provides a ligand contact to D-ribulose 5-phosphate. Cysteine 59 carries the post-translational modification S-glutathionyl cysteine. D-ribulose 5-phosphate is bound by residues threonine 85 and 142-146 (RRGHT). Histidine 145 is a binding site for Mg(2+).

In terms of assembly, homodimer. Mg(2+) is required as a cofactor. Mn(2+) serves as cofactor. In terms of processing, S-glutathionylation is reversible and dependent on a glutaredoxin.

It catalyses the reaction D-ribulose 5-phosphate = (2S)-2-hydroxy-3-oxobutyl phosphate + formate + H(+). Its pathway is cofactor biosynthesis; riboflavin biosynthesis; 2-hydroxy-3-oxobutyl phosphate from D-ribulose 5-phosphate: step 1/1. In terms of biological role, catalyzes the conversion of D-ribulose 5-phosphate to formate and 3,4-dihydroxy-2-butanone 4-phosphate. This chain is 3,4-dihydroxy-2-butanone 4-phosphate synthase (RIB3), found in Candida albicans (strain SC5314 / ATCC MYA-2876) (Yeast).